We begin with the raw amino-acid sequence, 990 residues long: MATSCNIRVMCRFRPLNEREKALKENQTCVTFPDETQVIVSGQPFTFDRVFTPESTQKEVFESVKDTIHDVLLGYNGTLLAYGQTGSGKTFTMGSAAAESDFENVEQLGIIPRGNHLIFNTIAEESDGNAEFTIKCSYLEIYMENIQDLLNPKNNKQLKIRESKSQGIYVEGLTEEYVASEEDIMELIQVGESSRSVAKTNMNQRSSRSHSILIIAIEQKSSDGSKKRGKLNLVDLAGSEKVSKTGAEGIVLEQAKKINQSLSLLGNCIHALTDSKREHIPFRDSKLTRLLQDSLGGNTKTTLLVTASPHFNNVDETISTLKFGARAKSIKNNVKVNQEKSAAELQIIVNALTKELSILKVYSISLENLVNYFKSSSYQPGNPIPKELEPNKQNLLLLQQQSNSSSGGGGSGSSGGSSNGSLMMKPRSTTPTPPSINRPHSSASTHRHSIAITGTHSKEGSGGGLTSSISSSSISSMSSLSSSIDNDYNGSSLDDSNGSNGLFNPLAIVEMSIEMEKMKEDTQLLIEKFKDEISEITIQYQSTQEELNQCRQQLDQIKEQLEQQRSQFIKEQSLLKESERNATLDSTSKDLKIQSLISKIEDLRLLASQVIQYLERKRLSDDFDIGIFMGSQDGANGDSANMFSLISNSIDQGTYEDDVNIEDIIRYLSEEEVLTMQVKLQLQNKVHQLEQKIQQLVSDLNTTEINYNQSILQCQKFESENSLIKRKFKSMFSSSNNNNNNNNSPPSSPSSKLLIQSSNNNNNFDSNLNSSSLSSSLPSSNGIEQDQQVDHQVDHQVENDHLVNDEDNKLLDENSKLKENELKLLLEIKNLKLQSEKSNDETLKWKDELSIKSALYQNQILNLQNENQSLSNKLNVEKQQKQSSQSQQIEFATKLNDLIKSSEDDKELYRNEKNQMELEIASLKASLDEMDLKNKELQDQLISTQRLIGARRVVKIVRGGADSMKTALATKEVFGQFTLRKTENSKTLFQ.

The 325-residue stretch at 6–330 (NIRVMCRFRP…LKFGARAKSI (325 aa)) folds into the Kinesin motor domain. 83 to 90 (GQTGSGKT) is a binding site for ATP. 2 disordered regions span residues 401–485 (QSNS…SSID) and 732–788 (FSSS…QDQQ). The span at 406–418 (SGGGGSGSSGGSS) shows a compositional bias: gly residues. 2 stretches are compositionally biased toward low complexity: residues 466–485 (TSSI…SSID) and 733–781 (SSSN…PSSN). The stretch at 513–948 (IEMEKMKEDT…DQLISTQRLI (436 aa)) forms a coiled coil.

It belongs to the TRAFAC class myosin-kinesin ATPase superfamily. Kinesin family. Kinesin subfamily. As to quaternary structure, interacts with actin.

The protein resides in the cytoplasm. It localises to the cytoskeleton. In terms of biological role, microtubule-associated force-producing protein that plays a role in organelle transport. Its motor activity is directed toward the microtubule's plus end. May connect microtubules to actin filaments. Associates with actin-based structures in cells and is likely involved in the organization of actin cytoskeletons in such structures. The protein is Kinesin-related protein 5 (kif5) of Dictyostelium discoideum (Social amoeba).